The primary structure comprises 352 residues: Protein RecA (352 aa).

65 to 72 serves as a coordination point for ATP; the sequence is GPESSGKT.

Belongs to the RecA family.

The protein resides in the cytoplasm. Functionally, can catalyze the hydrolysis of ATP in the presence of single-stranded DNA, the ATP-dependent uptake of single-stranded DNA by duplex DNA, and the ATP-dependent hybridization of homologous single-stranded DNAs. It interacts with LexA causing its activation and leading to its autocatalytic cleavage. Plays a functional role in the DNA rearrangement associated with the phenotypic switching from a pathogenic smooth to a nonpathogenic rough form in this bacterium. The protein is Protein RecA of Pseudomonas tolaasii.